Here is a 200-residue protein sequence, read N- to C-terminus: Holliday junction branch migration complex subunit RuvA (200 aa).

The tract at residues 1–63 (MIASVRGVVT…EDSLTLYGFA (63 aa)) is domain I. The segment at 64–142 (DDNAKALFEL…PVPVGGDGAA (79 aa)) is domain II. Residues 143-151 (GVTTGAWPE) form a flexible linker region. The segment at 151–200 (EQVRQALVGLGWTAGQAEQAVAAVAETVDGEVPPVPVLLRQAIRLLGRTR) is domain III.

The protein belongs to the RuvA family. In terms of assembly, homotetramer. Forms an RuvA(8)-RuvB(12)-Holliday junction (HJ) complex. HJ DNA is sandwiched between 2 RuvA tetramers; dsDNA enters through RuvA and exits via RuvB. An RuvB hexamer assembles on each DNA strand where it exits the tetramer. Each RuvB hexamer is contacted by two RuvA subunits (via domain III) on 2 adjacent RuvB subunits; this complex drives branch migration. In the full resolvosome a probable DNA-RuvA(4)-RuvB(12)-RuvC(2) complex forms which resolves the HJ.

It is found in the cytoplasm. Its function is as follows. The RuvA-RuvB-RuvC complex processes Holliday junction (HJ) DNA during genetic recombination and DNA repair, while the RuvA-RuvB complex plays an important role in the rescue of blocked DNA replication forks via replication fork reversal (RFR). RuvA specifically binds to HJ cruciform DNA, conferring on it an open structure. The RuvB hexamer acts as an ATP-dependent pump, pulling dsDNA into and through the RuvAB complex. HJ branch migration allows RuvC to scan DNA until it finds its consensus sequence, where it cleaves and resolves the cruciform DNA. The chain is Holliday junction branch migration complex subunit RuvA from Salinispora arenicola (strain CNS-205).